The sequence spans 392 residues: Ribonuclease D (392 aa).

The 3'-5' exonuclease domain occupies 12–178; it reads LIETTEALAA…PVYEGLRARL (167 aa). Residues 217-298 enclose the HRDC domain; sequence NRRQLALVKA…ASTKAIPDAE (82 aa).

Belongs to the RNase D family. The cofactor is a divalent metal cation.

It localises to the cytoplasm. It carries out the reaction Exonucleolytic cleavage that removes extra residues from the 3'-terminus of tRNA to produce 5'-mononucleotides.. In terms of biological role, exonuclease involved in the 3' processing of various precursor tRNAs. Initiates hydrolysis at the 3'-terminus of an RNA molecule and releases 5'-mononucleotides. This chain is Ribonuclease D, found in Acidiphilium cryptum (strain JF-5).